The sequence spans 274 residues: Orotidine 5'-phosphate decarboxylase (274 aa).

K96 (proton donor) is an active-site residue.

Belongs to the OMP decarboxylase family. Type 2 subfamily.

The enzyme catalyses orotidine 5'-phosphate + H(+) = UMP + CO2. The protein operates within pyrimidine metabolism; UMP biosynthesis via de novo pathway; UMP from orotate: step 2/2. The protein is Orotidine 5'-phosphate decarboxylase of Bacteroides fragilis (strain YCH46).